Here is a 937-residue protein sequence, read N- to C-terminus: Inactive tyrosine-protein kinase transmembrane receptor ROR1 (937 aa).

The N-terminal stretch at 1–29 (MHRPRRRGTRPPPLALLAALLLAARGADA) is a signal peptide. The Extracellular segment spans residues 30–406 (QETELSVSAE…KEKNKMEILY (377 aa)). An Ig-like C2-type domain is found at 42-141 (PTSSWNTSSE…VATNGKKVVS (100 aa)). N-linked (GlcNAc...) asparagine glycosylation is found at N47 and N66. Cystine bridges form between C79–C131, C170–C235, C178–C228, C219–C260, C248–C296, C252–C282, C313–C391, C334–C374, and C362–C386. In terms of domain architecture, FZ spans 165-299 (EEDGFCQPYR…SPEAANCIRI (135 aa)). A glycan (N-linked (GlcNAc...) asparagine) is linked at N184. The Kringle domain occupies 312–391 (KCYNSTGVDY…KSDLCDIPAC (80 aa)). A glycan (N-linked (GlcNAc...) asparagine) is linked at N315. A helical transmembrane segment spans residues 407-427 (ILVPSVAIPLAIAFLFFFICV). Residues 428-937 (CRNNQKSSSP…HTESMISAEV (510 aa)) are Cytoplasmic-facing. A Protein kinase domain is found at 473 to 746 (VRFMEELGEC…PRFKDIHVRL (274 aa)). ATP is bound by residues 479–487 (LGECTFGKI) and K506. Y645 carries the phosphotyrosine; by autocatalysis modification. Over residues 753–762 (SSHTSSTTPS) the composition is skewed to low complexity. Disordered regions lie at residues 753–778 (SSHT…ASPV), 840–890 (GPPR…HMSI), and 916–937 (QSSL…SAEV). Polar residues predominate over residues 763–778 (GGNATTQTTSLSASPV). Residues 854-864 (RSPSSASGSTS) are compositionally biased toward low complexity. Positions 865–880 (TGHVASLPSSGSNQEA) are enriched in polar residues.

The protein belongs to the protein kinase superfamily. Tyr protein kinase family. ROR subfamily. As to quaternary structure, interacts with ERBB2 and IGFBP5. In terms of tissue distribution, at postnatal P0, expressed in heart, lung, liver, kidney, spleen and inner ear.

It localises to the membrane. The protein localises to the cell projection. The protein resides in the axon. Its function is as follows. Has very low kinase activity in vitro and is unlikely to function as a tyrosine kinase in vivo. Receptor for ligand WNT5A which activate downstream NFkB signaling pathway and may result in the inhibition of WNT3A-mediated signaling. In inner ear, crucial for spiral ganglion neurons to innervate auditory hair cells. Via IGFBP5 ligand, forms a complex with ERBB2 to enhance CREB oncogenic signaling. The polypeptide is Inactive tyrosine-protein kinase transmembrane receptor ROR1 (Ror1) (Mus musculus (Mouse)).